The primary structure comprises 125 residues: Large ribosomal subunit protein bL12 (125 aa).

It belongs to the bacterial ribosomal protein bL12 family. In terms of assembly, homodimer. Part of the ribosomal stalk of the 50S ribosomal subunit. Forms a multimeric L10(L12)X complex, where L10 forms an elongated spine to which 2 to 4 L12 dimers bind in a sequential fashion. Binds GTP-bound translation factors.

Forms part of the ribosomal stalk which helps the ribosome interact with GTP-bound translation factors. Is thus essential for accurate translation. In Porphyromonas gingivalis (strain ATCC 33277 / DSM 20709 / CIP 103683 / JCM 12257 / NCTC 11834 / 2561), this protein is Large ribosomal subunit protein bL12.